Here is a 73-residue protein sequence, read N- to C-terminus: MRTIISLLLLSAMVFAVIEAISLEEGLQLFEGERGCVGENQQCADWAGLHCCSGYYCTCRYFPKCICRKDSGK.

The first 20 residues, 1–20 (MRTIISLLLLSAMVFAVIEA), serve as a signal peptide directing secretion. A propeptide spanning residues 21–34 (ISLEEGLQLFEGER) is cleaved from the precursor. Cystine bridges form between Cys36/Cys52, Cys43/Cys57, Cys51/Cys67, and Cys59/Cys65. Residue Ser71 is modified to Serine amide.

It belongs to the neurotoxin 07 (Beta/delta-agtx) family. 03 (aga-4) subfamily. Aga sub-subfamily. Expressed by the venom gland.

It localises to the secreted. Its function is as follows. Insecticidal neurotoxin that modulates the insect Nav channel (DmNaV1/tipE (para/tipE)) in a unique manner, with both the activation and inactivation processes being affected. The voltage dependence of activation is shifted toward more hyperpolarized potentials (analogous to site 4 toxins) and a non-inactivating persistent sodium current is induced (site 3-like action). Interestingly, both effects take place in a voltage-dependent manner, producing a bell-shaped curve between -80 and 0 mV. Compared to beta/delta-agatoxin-1 to -3, this toxin appears to affect the insect sodium channel only weakly. In Agelena orientalis (Funnel-web spider), this protein is U3-agatoxin-Ao1k.